The following is a 675-amino-acid chain: Potassium-transporting ATPase ATP-binding subunit (675 aa).

The next 4 helical transmembrane spans lie at 34-54, 65-85, 216-236, and 245-265; these read IMFV…FPDI, LITI…SEAF, IALF…IVTL, and LILP…TTIG. Asp-304 functions as the 4-aspartylphosphate intermediate in the catalytic mechanism. Residues Asp-341, Glu-345, 372-379, and Lys-390 contribute to the ATP site; that span reads FTAETRMS. The Mg(2+) site is built by Asp-513 and Asp-517. The next 3 helical transmembrane spans lie at 569–591, 611–631, and 644–664; these read ALTT…ALMM, AIIS…PIAM, and IFIN…FLGI.

This sequence belongs to the cation transport ATPase (P-type) (TC 3.A.3) family. Type IA subfamily. In terms of assembly, the system is composed of three essential subunits: KdpA, KdpB and KdpC.

It is found in the cell membrane. It carries out the reaction K(+)(out) + ATP + H2O = K(+)(in) + ADP + phosphate + H(+). Functionally, part of the high-affinity ATP-driven potassium transport (or Kdp) system, which catalyzes the hydrolysis of ATP coupled with the electrogenic transport of potassium into the cytoplasm. This subunit is responsible for energy coupling to the transport system and for the release of the potassium ions to the cytoplasm. The chain is Potassium-transporting ATPase ATP-binding subunit from Staphylococcus aureus (strain Newman).